The sequence spans 193 residues: ATP-dependent Clp protease proteolytic subunit 1 (193 aa).

The active-site Nucleophile is S98. H123 is an active-site residue.

Belongs to the peptidase S14 family. Fourteen ClpP subunits assemble into 2 heptameric rings which stack back to back to give a disk-like structure with a central cavity, resembling the structure of eukaryotic proteasomes.

Its subcellular location is the cytoplasm. It catalyses the reaction Hydrolysis of proteins to small peptides in the presence of ATP and magnesium. alpha-casein is the usual test substrate. In the absence of ATP, only oligopeptides shorter than five residues are hydrolyzed (such as succinyl-Leu-Tyr-|-NHMec, and Leu-Tyr-Leu-|-Tyr-Trp, in which cleavage of the -Tyr-|-Leu- and -Tyr-|-Trp bonds also occurs).. Cleaves peptides in various proteins in a process that requires ATP hydrolysis. Has a chymotrypsin-like activity. Plays a major role in the degradation of misfolded proteins. This Bacillus cereus (strain ATCC 10987 / NRS 248) protein is ATP-dependent Clp protease proteolytic subunit 1.